The sequence spans 710 residues: Polyribonucleotide nucleotidyltransferase (710 aa).

Mg(2+) is bound by residues Asp-488 and Asp-494. A KH domain is found at 555–615 (PVIKVISIDP…EKVDAAIEQI (61 aa)). Residues 625 to 688 (GDVFSGKVTR…NLGRLQLEEF (64 aa)) enclose the S1 motif domain. The disordered stretch occupies residues 688 to 710 (FSDSPDHKHGEKRSFKRHRKNDN). The span at 691–700 (SPDHKHGEKR) shows a compositional bias: basic and acidic residues. Positions 701 to 710 (SFKRHRKNDN) are enriched in basic residues.

This sequence belongs to the polyribonucleotide nucleotidyltransferase family. It depends on Mg(2+) as a cofactor.

The protein resides in the cytoplasm. It carries out the reaction RNA(n+1) + phosphate = RNA(n) + a ribonucleoside 5'-diphosphate. Involved in mRNA degradation. Catalyzes the phosphorolysis of single-stranded polyribonucleotides processively in the 3'- to 5'-direction. The polypeptide is Polyribonucleotide nucleotidyltransferase (Pseudothermotoga lettingae (strain ATCC BAA-301 / DSM 14385 / NBRC 107922 / TMO) (Thermotoga lettingae)).